The sequence spans 206 residues: Imidazoleglycerol-phosphate dehydratase (206 aa).

Residues 1–21 form a disordered region; sequence MTTPSTAPTPAPRKAEVSRNT.

Belongs to the imidazoleglycerol-phosphate dehydratase family.

Its subcellular location is the cytoplasm. The enzyme catalyses D-erythro-1-(imidazol-4-yl)glycerol 3-phosphate = 3-(imidazol-4-yl)-2-oxopropyl phosphate + H2O. It functions in the pathway amino-acid biosynthesis; L-histidine biosynthesis; L-histidine from 5-phospho-alpha-D-ribose 1-diphosphate: step 6/9. This is Imidazoleglycerol-phosphate dehydratase from Polaromonas sp. (strain JS666 / ATCC BAA-500).